Consider the following 334-residue polypeptide: Ornithine carbamoyltransferase (334 aa).

Carbamoyl phosphate contacts are provided by residues 57 to 60, Q84, R108, and 135 to 138; these read STRT and HPTQ. L-ornithine contacts are provided by residues N169, D233, and 237–238; that span reads SM. Carbamoyl phosphate-binding positions include 275-276 and R320; that span reads CL.

This sequence belongs to the aspartate/ornithine carbamoyltransferase superfamily. OTCase family.

The protein localises to the cytoplasm. The enzyme catalyses carbamoyl phosphate + L-ornithine = L-citrulline + phosphate + H(+). The protein operates within amino-acid biosynthesis; L-arginine biosynthesis; L-arginine from L-ornithine and carbamoyl phosphate: step 1/3. Functionally, reversibly catalyzes the transfer of the carbamoyl group from carbamoyl phosphate (CP) to the N(epsilon) atom of ornithine (ORN) to produce L-citrulline. This is Ornithine carbamoyltransferase from Aeromonas salmonicida (strain A449).